Here is a 525-residue protein sequence, read N- to C-terminus: Protein-serine O-palmitoleoyltransferase porcupine (525 aa).

9 consecutive transmembrane segments (helical) span residues 83-103 (VMQYVAPMLLLCLLCRLLCLL), 125-145 (LIILQITVGYRLLLLLLLAAV), 159-179 (GAQVLAVLTVGSQFLYELLIW), 220-240 (FAYLGYIYSPATCALGPWVSF), 260-280 (LLPNVVICVLAVTVSNCVAPA), 301-318 (VRSSHYFVGMMAQALLVA), 395-415 (SLLHGMDLRIYLVLISLAFLA), 467-487 (NLAFTALAIFHLAYLGVVLLG), and 505-525 (QAGYLSHYIGLGTFVLYLFIS). The active site involves H398.

This sequence belongs to the membrane-bound acyltransferase family. Porcupine subfamily. Interacts with wg and Wnt5.

It localises to the endoplasmic reticulum membrane. It catalyses the reaction [Wnt protein]-L-serine + (9Z)-hexadecenoyl-CoA = [Wnt protein]-O-(9Z)-hexadecenoyl-L-serine + CoA. Protein-serine O-palmitoleoyltransferase that acts as a key regulator of the Wnt signaling pathway by mediating the attachment of palmitoleate, a 16-carbon monounsaturated fatty acid (C16:1(9Z)), to Wnt proteins. Serine palmitoleoylation of Wnt proteins is required for efficient binding to frizzled receptors. Also facilitates the glycosylation of Wnt family members, including wg and Wnt5. The cotranslational disulfide bond formation of wg competes with the N-glycosylation. Porc stimulates the post-translational N-glycosylation by anchoring wg at the ER membrane, probably through acylation. This Drosophila melanogaster (Fruit fly) protein is Protein-serine O-palmitoleoyltransferase porcupine.